The chain runs to 20 residues: Collagenolytic protease 28 kDa (20 aa).

Residues 1 to 20 enclose the Peptidase S1 domain; sequence IVGGQEASPGSWPXQVGLFF.

The protein belongs to the peptidase S1 family.

It catalyses the reaction Hydrolysis of proteins, with broad specificity for peptide bonds. Native collagen is cleaved about 75% of the length of the molecule from the N-terminus. Low activity on small molecule substrates of both trypsin and chymotrypsin.. Functionally, this enzyme is a serine protease capable of degrading the native triple helix of collagen. This Paralithodes camtschaticus (Red king crab) protein is Collagenolytic protease 28 kDa.